The chain runs to 464 residues: Soluble pyridine nucleotide transhydrogenase (464 aa).

Position 35-44 (35-44 (DNRPLVGGNC)) interacts with FAD.

It belongs to the class-I pyridine nucleotide-disulfide oxidoreductase family. The cofactor is FAD.

The protein resides in the cytoplasm. It catalyses the reaction NAD(+) + NADPH = NADH + NADP(+). Its function is as follows. Conversion of NADPH, generated by peripheral catabolic pathways, to NADH, which can enter the respiratory chain for energy generation. This Stutzerimonas stutzeri (strain A1501) (Pseudomonas stutzeri) protein is Soluble pyridine nucleotide transhydrogenase.